Reading from the N-terminus, the 390-residue chain is Putative F-box protein At3g52320 (390 aa).

Residues 21-71 (VVFLPEIPEEMLIDILIRLPAKSLMRFKCVSKLWLSLITSRYFTNRFFKPS) enclose the F-box domain.

The protein is Putative F-box protein At3g52320 of Arabidopsis thaliana (Mouse-ear cress).